A 249-amino-acid chain; its full sequence is Proteasome subunit alpha type-3 (249 aa).

This sequence belongs to the peptidase T1A family. In terms of assembly, the 26S proteasome consists of a 20S proteasome core and two 19S regulatory subunits. The 20S proteasome core is composed of 28 subunits that are arranged in four stacked rings, resulting in a barrel-shaped structure. The two end rings are each formed by seven alpha subunits, and the two central rings are each formed by seven beta subunits. The catalytic chamber with the active sites is on the inside of the barrel.

It is found in the cytoplasm. Its subcellular location is the nucleus. Its function is as follows. The proteasome is a multicatalytic proteinase complex which is characterized by its ability to cleave peptides with Arg, Phe, Tyr, Leu, and Glu adjacent to the leaving group at neutral or slightly basic pH. The proteasome has an ATP-dependent proteolytic activity. This Oryza sativa subsp. japonica (Rice) protein is Proteasome subunit alpha type-3 (PAG1).